The chain runs to 1001 residues: Receptor-type tyrosine-protein phosphatase N2 (1001 aa).

The N-terminal stretch at 1 to 27 is a signal peptide; that stretch reads MGPPLPLLLLLLLPPPLPRALPAPASA. The tract at residues 1 to 407 is involved in localization to secretory granules; interaction with CPE; it reads MGPPLPLLLL…PEGPLLEKSS (407 aa). At 28–600 the chain is on the extracellular side; the sequence is RGRQLPGRLG…HQEEQEDSTK (573 aa). Arg-259 bears the Omega-N-methylarginine mark. Disordered stretches follow at residues 271–296, 308–359, and 394–459; these read PFSATALSQRWPPPPGDAKDSPSMDD, QQNS…DAPE, and SPLL…LEDQ. Residues 312–325 are compositionally biased toward basic and acidic residues; that stretch reads EVDRLGPLKEEKAD. Phosphoserine is present on Ser-339. Positions 340–355 are enriched in basic and acidic residues; sequence QESHGRGAEGQPREQT. The segment covering 394 to 404 has biased composition (low complexity); the sequence is SPLLPEGPLLE. Residues 405-416 show a composition bias toward basic and acidic residues; it reads KSSREEIKKSEQ. The span at 417 to 428 shows a compositional bias: acidic residues; that stretch reads PEEVLSSEEETA. A phosphoserine mark is found at Ser-422 and Ser-423. Basic and acidic residues predominate over residues 429–459; that stretch reads GVEHVRSRTYSKDLFERKPNSEPQPRRLEDQ. N-linked (GlcNAc...) asparagine glycosylation occurs at Asn-550. Residues 601–621 traverse the membrane as a helical segment; it reads FILLTFLSIACILGVLLASSL. The Cytoplasmic segment spans residues 622 to 1001; the sequence is AYCLRHNSHY…VNAILKALPQ (380 aa). The Tyrosine-based internalization motif signature appears at 652-661; the sequence is YQELCRQRMA. The disordered stretch occupies residues 663-705; that stretch reads RPQDRSEGPHTSRINSVSSQFSDGPMPSPSARSSTSSWSEEPV. The segment covering 674–684 has biased composition (polar residues); sequence SRINSVSSQFS. Phosphoserine occurs at positions 678 and 684. Residues 691-705 are compositionally biased toward low complexity; it reads PSARSSTSSWSEEPV. Thr-697 is subject to Phosphothreonine. Residues 731–991 form the Tyrosine-protein phosphatase domain; sequence LEKEWEALCA…EFALTAVAEE (261 aa). Substrate contacts are provided by residues Asp-899 and 931–937; that span reads CSDGAGR. Cys-931 serves as the catalytic Phosphocysteine intermediate. Lys-956 is subject to N6-acetyllysine. Residue Gln-976 coordinates substrate. Residues 990-996 carry the Leucine-based sorting signal motif; that stretch reads EEVNAIL.

This sequence belongs to the protein-tyrosine phosphatase family. As to quaternary structure, self-associates. Interacts (via cytoplasmic domain) with PTPRN (via cytoplasmic domain). Interacts (precursor form) with CPE. Interacts with HAP1 isoform A. Interacts with AP2A1 or AP2A2 and AP1G1; indicative for an association with adaptor protein complex 2 (AP-2) and adaptor protein complex 1 (AP-1). Interacts with AP2M1; indicative for an association with adaptor protein complex 2 (AP-2). Interacts with MYO5A. In terms of processing, subject to proteolytic cleavage at multiple sites during maturation of secretory granules. In the brain at least IA-2beta71, IA-2beta64 and IA-2beta60 have been detected, in the pancreas and a pancreatic beta cell line only IA-2beta60 has been detected. As to expression, detected in brain. Detected in pancreas islets (at protein level). Detected in pancreas and brain.

It is found in the cytoplasmic vesicle. Its subcellular location is the secretory vesicle membrane. The protein resides in the secretory vesicle. The protein localises to the synaptic vesicle membrane. It catalyses the reaction O-phospho-L-tyrosyl-[protein] + H2O = L-tyrosyl-[protein] + phosphate. Functionally, plays a role in vesicle-mediated secretory processes. Required for normal accumulation of secretory vesicles in hippocampus, pituitary and pancreatic islets. Required for the accumulation of normal levels of insulin-containing vesicles and preventing their degradation. Plays a role in insulin secretion in response to glucose stimuli. Required for normal accumulation of the neurotransmitters norepinephrine, dopamine and serotonin in the brain. In females, but not in males, required for normal accumulation and secretion of pituitary hormones, such as luteinizing hormone (LH) and follicle-stimulating hormone (FSH). Required to maintain normal levels of renin expression and renin release. May regulate catalytic active protein-tyrosine phosphatases such as PTPRA through dimerization. Has phosphatidylinositol phosphatase activity; the PIPase activity is involved in its ability to regulate insulin secretion. Can dephosphorylate phosphatidylinositol 4,5-biphosphate (PI(4,5)P2), phosphatidylinositol 5-phosphate and phosphatidylinositol 3-phosphate. Regulates PI(4,5)P2 level in the plasma membrane and localization of cofilin at the plasma membrane and thus is indirectly involved in regulation of actin dynamics related to cell migration and metastasis; upon hydrolysis of PI(4,5)P2 cofilin is released from the plasma membrane and acts in the cytoplasm in severing F-actin filaments. This Mus musculus (Mouse) protein is Receptor-type tyrosine-protein phosphatase N2 (Ptprn2).